The primary structure comprises 385 residues: Leucine aminopeptidase 1 (385 aa).

A signal peptide spans 1–19; that stretch reads MKFPSFLSLGIAASTTALA. The propeptide occupies 20–87; sequence ALPDQKPIGD…FPRAFAKTAV (68 aa). N177 carries N-linked (GlcNAc...) asparagine glycosylation. H185 and D204 together coordinate Zn(2+). An N-linked (GlcNAc...) asparagine glycan is attached at N229. Zn(2+) is bound by residues E243 and D270. C319 and C323 are disulfide-bonded. A Zn(2+)-binding site is contributed by H352.

It belongs to the peptidase M28 family. M28E subfamily. As to quaternary structure, monomer. It depends on Zn(2+) as a cofactor.

Its subcellular location is the secreted. In terms of biological role, extracellular aminopeptidase that allows assimilation of proteinaceous substrates. The sequence is that of Leucine aminopeptidase 1 (LAP1) from Blastomyces gilchristii (strain SLH14081) (Blastomyces dermatitidis).